We begin with the raw amino-acid sequence, 288 residues long: Protease HtpX (288 aa).

Helical transmembrane passes span 4–24 (ILLF…ILTL) and 33–53 (VGLL…SLLM). Position 139 (H139) interacts with Zn(2+). E140 is a catalytic residue. H143 is a Zn(2+) binding site. The next 2 helical transmembrane spans lie at 146–166 (SGDM…VIFI) and 186–206 (IYFM…SMIA). A Zn(2+)-binding site is contributed by E214.

The protein belongs to the peptidase M48B family. Zn(2+) is required as a cofactor.

It localises to the cell inner membrane. The sequence is that of Protease HtpX from Histophilus somni (strain 2336) (Haemophilus somnus).